An 827-amino-acid polypeptide reads, in one-letter code: MQNSLSVPPRDEGESNIPSGTIQSRKGLQNKSQFRTIAPKIVPKVLTSRMLPCHSPSHSDQVNLGPSINSKPLGMSTQNYALMQVAGQEGTFSLVALPHVASAQPIQKPRMSLPENLKLPIPRYQPPRNSKGSRKKPILIFPKSGCSKAPAQTQMCPQMSPSPPHHPELLYKPSPFEEVPSLEQAPASISTAALTNGSDHGDLRPPVTNTHGSLNPPATPASPTPEEPAKQDLTDLSGKAHFVSKITSSKPSAVVSEKFKEQVYLAKTMTSLSPAILGNAVQLISSVPKGKLPIPPYSRMKTTEVYKIKSDANIAGFSLPGPKADCDKISSTTEGFNAATKVASKLPVPQVSQQSACESAFCPPTKLDLNHKTKLNSGAAKRKGRKWKVPDEILAFQGKRRKCIINKCRDGKERVKNDPQEFRDQKLGTLKKYRSIMPKPIMVIPTLASLASPTIQSQMLGGLGQDVLLNNSLTPKYLGCKQDNSSSPKPSSVFRNGFSGIKKPWHRCHVCNHHFQFKQHLQDHMNTHTNRRPYSCRICRKSYVRPGSLSTHMKLHHGENRLKKLMCCEFCAKVFGHIRVYFGHLKEVHRVVISTEPAPSELQPGDIPKNRDVSVQGMEGSLERENKSNLEEDFLLNQAGEVKLQIKCGRCQITAQSFAEIKFHLLYVHGEEIQGRLQEGTFPGSKGTQEELVQHASHDWKRHPERGKPEKVHSSSEESHACPRLKRQLHLHQNGVEMPIENEGPQSGTNKPRETCQGPECPGLHTVLLWSRSGFNCLLCAEMLGQKEDLLHHWKHQHNCEDPSKLWAILNTVSNQGVIELSSEAEK.

Disordered stretches follow at residues 1-31 (MQNSLSVPPRDEGESNIPSGTIQSRKGLQNK), 117-173 (LKLP…LYKP), and 193-232 (ALTNGSDHGDLRPPVTNTHGSLNPPATPASPTPEEPAKQD). 2 stretches are compositionally biased toward polar residues: residues 16-31 (NIPSGTIQSRKGLQNK) and 150-159 (PAQTQMCPQM). Pro residues predominate over residues 217-226 (PATPASPTPE). 3 consecutive C2H2-type zinc fingers follow at residues 506–528 (HRCHVCNHHFQFKQHLQDHMNTH), 534–556 (YSCRICRKSYVRPGSLSTHMKLH), and 566–589 (MCCEFCAKVFGHIRVYFGHLKEVH). The interval 682–723 (FPGSKGTQEELVQHASHDWKRHPERGKPEKVHSSSEESHACP) is disordered. 2 stretches are compositionally biased toward basic and acidic residues: residues 688 to 699 (TQEELVQHASHD) and 706 to 721 (RGKPEKVHSSSEESHA). The C2H2-type 4 zinc finger occupies 775–798 (FNCLLCAEMLGQKEDLLHHWKHQH).

It localises to the nucleus. In terms of biological role, acts as a transcriptional repressor. The chain is Zinc finger protein 438 (ZNF438) from Pongo abelii (Sumatran orangutan).